Here is a 75-residue protein sequence, read N- to C-terminus: Kappa-scoloptoxin(03)-Ssm1e (75 aa).

Positions M1–S23 are cleaved as a signal peptide.

It belongs to the scoloptoxin-03 family. Post-translationally, contains 3 disulfide bonds. In terms of tissue distribution, expressed by the venom gland.

It localises to the secreted. In terms of biological role, inhibits voltage-gated potassium channels. The polypeptide is Kappa-scoloptoxin(03)-Ssm1e (Scolopendra mutilans (Chinese red-headed centipede)).